Reading from the N-terminus, the 156-residue chain is uncharacterized protein (156 aa).

Residues 43 to 84 (LKIDENEVKLEISVEKLKNLSRVCENIEQVVDKVVEELRYAL) are a coiled coil.

This is an uncharacterized protein from Aquifex aeolicus (strain VF5).